A 382-amino-acid polypeptide reads, in one-letter code: uncharacterized protein (382 aa).

Helical transmembrane passes span 8-28, 45-65, 75-95, 102-122, 131-151, 157-177, 204-224, 231-251, 274-294, 325-345, and 349-369; these read VMLL…LNTL, MVSS…GYLI, YLAS…VGFW, FIAG…LMCS, LLAA…LLVS, LLHV…PLLF, LGVN…GLMP, GMAN…GILG, VVIL…ALFI, ALLL…AMLM, and SDNL…LMLL.

The protein belongs to the major facilitator superfamily. YcaD (TC 2.A.1.26) family.

The protein localises to the cell inner membrane. This is an uncharacterized protein from Salmonella gallinarum (strain 287/91 / NCTC 13346).